The chain runs to 361 residues: Biotin synthase (361 aa).

The 226-residue stretch at 83 to 308 (PEVEVEGIIS…RTILRYAGGR (226 aa)) folds into the Radical SAM core domain. Residues Cys-98, Cys-102, and Cys-105 each contribute to the [4Fe-4S] cluster site. 4 residues coordinate [2Fe-2S] cluster: Cys-141, Cys-174, Cys-233, and Arg-303.

It belongs to the radical SAM superfamily. Biotin synthase family. In terms of assembly, homodimer. The cofactor is [4Fe-4S] cluster. [2Fe-2S] cluster serves as cofactor.

It carries out the reaction (4R,5S)-dethiobiotin + (sulfur carrier)-SH + 2 reduced [2Fe-2S]-[ferredoxin] + 2 S-adenosyl-L-methionine = (sulfur carrier)-H + biotin + 2 5'-deoxyadenosine + 2 L-methionine + 2 oxidized [2Fe-2S]-[ferredoxin]. It functions in the pathway cofactor biosynthesis; biotin biosynthesis; biotin from 7,8-diaminononanoate: step 2/2. Its function is as follows. Catalyzes the conversion of dethiobiotin (DTB) to biotin by the insertion of a sulfur atom into dethiobiotin via a radical-based mechanism. This is Biotin synthase from Parafrankia sp. (strain EAN1pec).